Reading from the N-terminus, the 760-residue chain is 5-methyltetrahydropteroyltriglutamate--homocysteine methyltransferase (760 aa).

Residues 15–18 (RELK) and Lys-114 each bind 5-methyltetrahydropteroyltri-L-glutamate. Residues 436-438 (IGS) and Glu-489 each bind L-homocysteine. Residues 436-438 (IGS) and Glu-489 contribute to the L-methionine site. Residues 520-521 (RC) and Trp-566 each bind 5-methyltetrahydropteroyltri-L-glutamate. Asp-604 is a binding site for L-homocysteine. L-methionine is bound at residue Asp-604. Glu-610 serves as a coordination point for 5-methyltetrahydropteroyltri-L-glutamate. Positions 646, 648, and 670 each coordinate Zn(2+). Catalysis depends on His-699, which acts as the Proton donor. Cys-731 is a binding site for Zn(2+).

The protein belongs to the vitamin-B12 independent methionine synthase family. Zn(2+) serves as cofactor.

The enzyme catalyses 5-methyltetrahydropteroyltri-L-glutamate + L-homocysteine = tetrahydropteroyltri-L-glutamate + L-methionine. It participates in amino-acid biosynthesis; L-methionine biosynthesis via de novo pathway; L-methionine from L-homocysteine (MetE route): step 1/1. Its function is as follows. Catalyzes the transfer of a methyl group from 5-methyltetrahydrofolate to homocysteine resulting in methionine formation. This is 5-methyltetrahydropteroyltriglutamate--homocysteine methyltransferase from Shewanella oneidensis (strain ATCC 700550 / JCM 31522 / CIP 106686 / LMG 19005 / NCIMB 14063 / MR-1).